A 23-amino-acid chain; its full sequence is KAEEEVEKNKEEAEEEAEKKIAE.

Residues 1-23 are disordered; the sequence is KAEEEVEKNKEEAEEEAEKKIAE. Positions 7–23 are enriched in basic and acidic residues; it reads EKNKEEAEEEAEKKIAE.

Functionally, gp22 functions in head assembly. Internal peptide VII: Cleavage product of Gp22 that is incorporated into the mature phage head. In Enterobacteria phage T2 (Bacteriophage T2), this protein is Major prohead-scaffolding core protein Gp22 (22).